The following is a 426-amino-acid chain: Growth-regulating factor 9 (426 aa).

Positions 92–127 constitute a QLQ domain; that stretch reads PFTPSQWMELEHQALIYKYLNAKAPIPSSLLISISK. The WRC domain occupies 151-195; that stretch reads DPEPGRCRRTDGKKWRCSKEAMADHKYCERHINRNRHRSRKPVEN. Short sequence motifs (bipartite nuclear localization signal) lie at residues 156 to 166 and 184 to 191; these read RCRRTDGKKWR and RNRHRSRK. The segment at 184–222 is disordered; it reads RNRHRSRKPVENQSRKTVKETPCAGSLPSSVGQGSFKKA. Over residues 191-202 the composition is skewed to basic and acidic residues; sequence KPVENQSRKTVK.

Belongs to the GRF family.

It is found in the nucleus. Its function is as follows. Transcription activator that plays a regulatory role in gibberellin-induced stem elongation. This Oryza sativa subsp. japonica (Rice) protein is Growth-regulating factor 9 (GRF9).